A 312-amino-acid chain; its full sequence is Ribosomal RNA small subunit methyltransferase H (312 aa).

Residues 1–24 form a disordered region; it reads MNIMTANQGAVSPSQTESEASPPT. Residues 55 to 57, Asp-72, Tyr-96, Asp-117, and Gln-124 each bind S-adenosyl-L-methionine; that span reads AGH. The disordered stretch occupies residues 288 to 312; it reads EQVDNPRARSAKLRVGERAAAPEGS.

Belongs to the methyltransferase superfamily. RsmH family.

It localises to the cytoplasm. It catalyses the reaction cytidine(1402) in 16S rRNA + S-adenosyl-L-methionine = N(4)-methylcytidine(1402) in 16S rRNA + S-adenosyl-L-homocysteine + H(+). Functionally, specifically methylates the N4 position of cytidine in position 1402 (C1402) of 16S rRNA. The sequence is that of Ribosomal RNA small subunit methyltransferase H from Deinococcus radiodurans (strain ATCC 13939 / DSM 20539 / JCM 16871 / CCUG 27074 / LMG 4051 / NBRC 15346 / NCIMB 9279 / VKM B-1422 / R1).